Reading from the N-terminus, the 176-residue chain is Crossover junction endodeoxyribonuclease RuvC (176 aa).

Residues D8, E69, and D141 contribute to the active site. The Mg(2+) site is built by D8, E69, and D141.

It belongs to the RuvC family. As to quaternary structure, homodimer which binds Holliday junction (HJ) DNA. The HJ becomes 2-fold symmetrical on binding to RuvC with unstacked arms; it has a different conformation from HJ DNA in complex with RuvA. In the full resolvosome a probable DNA-RuvA(4)-RuvB(12)-RuvC(2) complex forms which resolves the HJ. Mg(2+) is required as a cofactor.

The protein localises to the cytoplasm. It carries out the reaction Endonucleolytic cleavage at a junction such as a reciprocal single-stranded crossover between two homologous DNA duplexes (Holliday junction).. Functionally, the RuvA-RuvB-RuvC complex processes Holliday junction (HJ) DNA during genetic recombination and DNA repair. Endonuclease that resolves HJ intermediates. Cleaves cruciform DNA by making single-stranded nicks across the HJ at symmetrical positions within the homologous arms, yielding a 5'-phosphate and a 3'-hydroxyl group; requires a central core of homology in the junction. The consensus cleavage sequence is 5'-(A/T)TT(C/G)-3'. Cleavage occurs on the 3'-side of the TT dinucleotide at the point of strand exchange. HJ branch migration catalyzed by RuvA-RuvB allows RuvC to scan DNA until it finds its consensus sequence, where it cleaves and resolves the cruciform DNA. This chain is Crossover junction endodeoxyribonuclease RuvC, found in Pseudomonas syringae pv. tomato (strain ATCC BAA-871 / DC3000).